Here is a 196-residue protein sequence, read N- to C-terminus: MENSVNNCVRQRVFSNHQIRMIHEEEDHEESSWIVYFEDIDHDDEMVETEGEMTHYYDNDSSMISDAASPVHTTKINNVVRRKANNINTNPKKRRIIHQHKEEEEEELQKGEEEEEDEEDTASSPSNKTKIFSVLDHANDNTRYGKTMDNVTSEEIGCITETGSKIKEIMNEEFSAELKKRGLCVVPLSMLSNFIA.

Residues 84–130 (ANNINTNPKKRRIIHQHKEEEEEELQKGEEEEEDEEDTASSPSNKTK) form a disordered region. A compositionally biased stretch (acidic residues) spans 103 to 121 (EEEEELQKGEEEEEDEEDT).

In terms of biological role, involved in the regulation of plant growth. The polypeptide is Vascular-related unknown protein 2 (Arabidopsis thaliana (Mouse-ear cress)).